Consider the following 418-residue polypeptide: Glutamate dehydrogenase (418 aa).

The active site involves lysine 105. 217-223 (GYGNVGY) contributes to the NAD(+) binding site.

It belongs to the Glu/Leu/Phe/Val dehydrogenases family. In terms of assembly, homohexamer.

The protein localises to the cytoplasm. The enzyme catalyses L-glutamate + NAD(+) + H2O = 2-oxoglutarate + NH4(+) + NADH + H(+). It carries out the reaction L-glutamate + NADP(+) + H2O = 2-oxoglutarate + NH4(+) + NADPH + H(+). The polypeptide is Glutamate dehydrogenase (gdhA) (Aeropyrum pernix (strain ATCC 700893 / DSM 11879 / JCM 9820 / NBRC 100138 / K1)).